A 244-amino-acid chain; its full sequence is MSPEVLSARPGFVRNLMDVMMKPVLQLPPMTCQRIREIDSLAMEQFQMPGIILMENAGRGAAELIEELAPEGNVLILCGKGNNGGDGFTIARHLQLAGREVMILAMAATNELQGDAAIQAKIAEAAGIKIQVVGEAVEAGRLPATDIVVDGLLGTGAKPPLRGRYAEVVEAANASSAIRIALDIPTGMNGDTGETGETTFRADHTLTFAAPKVGFEKLGAARFTGEVHVISIGVPLELLRQFSV.

Residues 35-240 (IREIDSLAME…SIGVPLELLR (206 aa)) enclose the YjeF N-terminal domain. 82 to 86 (NNGGD) contacts (6S)-NADPHX. Positions 83 and 150 each coordinate K(+). Residues 154–160 (GTGAKPP), Tyr165, and Asp183 contribute to the (6S)-NADPHX site. Thr186 lines the K(+) pocket.

The protein belongs to the NnrE/AIBP family. The cofactor is K(+).

The enzyme catalyses (6R)-NADHX = (6S)-NADHX. It catalyses the reaction (6R)-NADPHX = (6S)-NADPHX. Its function is as follows. Catalyzes the epimerization of the S- and R-forms of NAD(P)HX, a damaged form of NAD(P)H that is a result of enzymatic or heat-dependent hydration. This is a prerequisite for the S-specific NAD(P)H-hydrate dehydratase to allow the repair of both epimers of NAD(P)HX. The polypeptide is NAD(P)H-hydrate epimerase (Rhodopirellula baltica (strain DSM 10527 / NCIMB 13988 / SH1)).